A 342-amino-acid polypeptide reads, in one-letter code: Strictosidine synthase (342 aa).

The signal sequence occupies residues Lys1–Ser20. N-linked (GlcNAc...) asparagine glycosylation is present at Asn89.

This sequence belongs to the strictosidine synthase family. In terms of assembly, monomer.

Its subcellular location is the vacuole. It catalyses the reaction 3alpha(S)-strictosidine + H2O = secologanin + tryptamine. The protein operates within alkaloid biosynthesis; 3alpha(S)-strictosidine biosynthesis; 3alpha(S)-strictosidine from secologanin and tryptamine: step 1/1. Catalyzes the stereospecific condensation of tryptamine with secologanin to form strictosidine, the key intermediate of indole alkaloid biosynthesis. This chain is Strictosidine synthase (STR1), found in Rauvolfia mannii.